A 112-amino-acid chain; its full sequence is Large ribosomal subunit protein uL18 (112 aa).

It belongs to the universal ribosomal protein uL18 family. Part of the 50S ribosomal subunit; part of the 5S rRNA/L5/L18/L25 subcomplex. Contacts the 5S and 23S rRNAs.

Its function is as follows. This is one of the proteins that bind and probably mediate the attachment of the 5S RNA into the large ribosomal subunit, where it forms part of the central protuberance. This is Large ribosomal subunit protein uL18 from Thermus thermophilus (strain ATCC BAA-163 / DSM 7039 / HB27).